The primary structure comprises 523 residues: REST corepressor 2 (523 aa).

Residues 1–43 (MPSVMEKPSAGSGILSRSRAKTAPNGGQPHSEDDSSEEEHSHD) form a disordered region. The span at 30–43 (HSEDDSSEEEHSHD) shows a compositional bias: basic and acidic residues. Phosphoserine is present on residues Ser-31, Ser-35, Ser-36, and Ser-63. In terms of domain architecture, ELM2 spans 44-129 (SMIRVGTNYQ…KSLADLANFT (86 aa)). Lys-88 is covalently cross-linked (Glycyl lysine isopeptide (Lys-Gly) (interchain with G-Cter in SUMO2)). The SANT 1 domain maps to 130-181 (PFPDEWTVEDKVLFEQAFGFHGKCFQRIQQMLPDKVIPSLVKYYYSWKKTRS). A disordered region spans residues 185 to 244 (VMDRQARRLGGRKDKEDSDELEEGRGAVSEGEPDTGDPKREPLPSRPLNARPGPGKKEVQ). Position 202 is a phosphoserine (Ser-202). A coiled-coil region spans residues 283–314 (TLRGLDSQLISLKRQVQSMKQTNSSLRQALEG). The 52-residue stretch at 327–378 (KFNSRWTTDEQLLAVQAIRRYGKDFGAIAEVIGNKTLTQVKTFFVSYRRRFN) folds into the SANT 2 domain. Residues 387–523 (EAEQDGAPAA…APLEPPAPSL (137 aa)) form a disordered region. A compositionally biased stretch (pro residues) spans 432–459 (SVPPAPPPPPPPTSLSQPPPLLRPPLPT). The span at 460–482 (APTLLRQPPPLQQGRFLQPRLAP) shows a compositional bias: low complexity. The residue at position 479 (Arg-479) is an Asymmetric dimethylarginine. Over residues 504-523 (GPQPPPTLVGAPLEPPAPSL) the composition is skewed to pro residues.

This sequence belongs to the CoREST family. In terms of tissue distribution, predominantly, but not exclusively, expressed in neural tissue. Strongly expressed in neural domains of the developing brain of the developing mouse CNS.

It localises to the nucleus. Functionally, may act as a component of a corepressor complex that represses transcription. In Mus musculus (Mouse), this protein is REST corepressor 2 (Rcor2).